Consider the following 226-residue polypeptide: Ribonuclease 3 (226 aa).

The region spanning 6 to 128 (INRLQRKLGY…LIGGVFLDSD (123 aa)) is the RNase III domain. Residue E41 coordinates Mg(2+). D45 is an active-site residue. Positions 114 and 117 each coordinate Mg(2+). The active site involves E117. The DRBM domain occupies 155–225 (DPKTRLQEFL…AEQALIKLEL (71 aa)).

It belongs to the ribonuclease III family. In terms of assembly, homodimer. The cofactor is Mg(2+).

Its subcellular location is the cytoplasm. The catalysed reaction is Endonucleolytic cleavage to 5'-phosphomonoester.. Digests double-stranded RNA. Involved in the processing of primary rRNA transcript to yield the immediate precursors to the large and small rRNAs (23S and 16S). Processes some mRNAs, and tRNAs when they are encoded in the rRNA operon. Processes pre-crRNA and tracrRNA of type II CRISPR loci if present in the organism. This is Ribonuclease 3 from Serratia proteamaculans (strain 568).